Consider the following 464-residue polypeptide: tRNA modification GTPase MnmE (464 aa).

Positions 23, 84, and 123 each coordinate (6S)-5-formyl-5,6,7,8-tetrahydrofolate. Residues 216-386 enclose the TrmE-type G domain; sequence GARATLVGRP…LGATVARLLL (171 aa). Residue Asn-226 coordinates K(+). GTP contacts are provided by residues 226–231, 245–251, and 270–273; these read NAGKSS, TPIPGTT, and DTAG. Ser-230 contacts Mg(2+). 3 residues coordinate K(+): Thr-245, Ile-247, and Thr-250. Residue Thr-251 coordinates Mg(2+). Lys-464 contacts (6S)-5-formyl-5,6,7,8-tetrahydrofolate.

Belongs to the TRAFAC class TrmE-Era-EngA-EngB-Septin-like GTPase superfamily. TrmE GTPase family. Homodimer. Heterotetramer of two MnmE and two MnmG subunits. K(+) is required as a cofactor.

Its subcellular location is the cytoplasm. Exhibits a very high intrinsic GTPase hydrolysis rate. Involved in the addition of a carboxymethylaminomethyl (cmnm) group at the wobble position (U34) of certain tRNAs, forming tRNA-cmnm(5)s(2)U34. The polypeptide is tRNA modification GTPase MnmE (Roseiflexus castenholzii (strain DSM 13941 / HLO8)).